We begin with the raw amino-acid sequence, 166 residues long: Spiderine-1b (166 aa).

A signal peptide spans 1–18 (MKFALVLLGICAFYLVNA). Residues 19-58 (TGDLETELEASELQELQEALDLIGETSLESLEAEELEEAR) constitute a propeptide, removed in mature form. The linear cationic cytotoxin domain stretch occupies residues 59 to 99 (KFKWGKLFSAAKKLYKKGKKLSKNKNFKKALKFGKQLAKNL). The Oxytoxin-type inhibitor cystine knot (ICK) domain occupies 113-166 (NNKCWAIGTTCSDDCDCCPEHHCHCPAGKWLPGLFRCTCQVTESDKVNKCPPAE). 5 disulfide bridges follow: Cys-116/Cys-130, Cys-123/Cys-135, Cys-127/Cys-162, Cys-129/Cys-151, and Cys-137/Cys-149.

It belongs to the spiderine family. Cationic/spiderine subfamily. As to expression, expressed by the venom gland.

Its subcellular location is the secreted. Its function is as follows. Has antimicrobial, insecticidal, cytolytic and cytotoxic activity. This is Spiderine-1b from Oxyopes takobius (Lynx spider).